Here is a 621-residue protein sequence, read N- to C-terminus: Myosin-binding protein C, slow-type (621 aa).

Ig-like C2-type domains follow at residues 1–53 (EEIV…VDLR), 54–142 (PLKI…HVID), and 144–241 (PKII…LWIS). Phosphothreonine is present on Thr28. Residue Ser233 is modified to Phosphoserine. 3 Fibronectin type-III domains span residues 244 to 343 (LRLA…TSPP), 344 to 459 (TLLA…IEPP), and 556 to 621 (PPQA…VIGN). Phosphothreonine is present on Thr420. Residue Tyr445 is modified to Phosphotyrosine. The Ig-like C2-type 4 domain maps to 459–553 (PKIRIPRHLK…ASIDIQIVDR (95 aa)).

It belongs to the immunoglobulin superfamily. MyBP family. Interacts with USP25 (isoform USP25m only); the interaction prevents proteasomal degradation of MYBPC1.

Functionally, thick filament-associated protein located in the crossbridge region of vertebrate striated muscle a bands. Slow skeletal protein that binds to both myosin and actin. In vitro, binds to native thin filaments and modifies the activity of actin-activated myosin ATPase. May modulate muscle contraction or may play a more structural role. The protein is Myosin-binding protein C, slow-type (Mybpc1) of Rattus norvegicus (Rat).